The primary structure comprises 380 residues: Cyclohexane-1-carbonyl-CoA dehydrogenase (380 aa).

The protein belongs to the acyl-CoA dehydrogenase family. As to quaternary structure, homotetramer. It depends on FAD as a cofactor.

It catalyses the reaction cyclohexane-1-carbonyl-CoA + oxidized [electron-transfer flavoprotein] + H(+) = cyclohex-1-ene-1-carbonyl-CoA + reduced [electron-transfer flavoprotein]. Functionally, acyl-CoA dehydrogenase involved in the anaerobic degradation of cyclohexane carboxylic acid (CHC). Catalyzes the 1,2-dehydrogenation of cyclohexane-1-carbonyl-CoA (CHCoA) to cyclohex-1-ene-1-carbonyl-CoA (CHeneCoA). An alternative substrate, cyclohex-3-ene-1-carboxyl-CoA can be converted to the corresponding cyclohexadiene-1-carboxyl-CoA isomers (30% rate compared to CHC). The protein is Cyclohexane-1-carbonyl-CoA dehydrogenase of Geobacter metallireducens (strain ATCC 53774 / DSM 7210 / GS-15).